The chain runs to 258 residues: UPF0758 protein Bamb_2548 (258 aa).

The tract at residues 1-43 (MLSPCLAAPATECRDPADAPAAPARHTGPARPRKRRPRNWKPH) is disordered. Positions 31-43 (RPRKRRPRNWKPH) are enriched in basic residues. The MPN domain maps to 136–258 (QIDSPGAVED…TFSFARAGWL (123 aa)). The Zn(2+) site is built by His207, His209, and Asp220. The JAMM motif motif lies at 207-220 (HNHPSGAVQPSAED).

The protein belongs to the UPF0758 family.

The polypeptide is UPF0758 protein Bamb_2548 (Burkholderia ambifaria (strain ATCC BAA-244 / DSM 16087 / CCUG 44356 / LMG 19182 / AMMD) (Burkholderia cepacia (strain AMMD))).